Consider the following 136-residue polypeptide: Secreted RxLR effector protein 15 (136 aa).

The N-terminal stretch at 1 to 22 (MRGHSALMMAVVTLAAVSSGAA) is a signal peptide. A RxLR motif is present at residues 47 to 50 (RLLR).

The protein belongs to the RxLR effector family.

Its subcellular location is the secreted. The protein resides in the host nucleus. It is found in the host cytoplasm. Its function is as follows. Effector that completely suppresses the host cell death induced by cell death-inducing proteins. The sequence is that of Secreted RxLR effector protein 15 from Plasmopara viticola (Downy mildew of grapevine).